Here is a 426-residue protein sequence, read N- to C-terminus: MCKEIYDLIAKELYRQQSTIELIASENFTSKAVMLAQGSILTNKYAEGYINKRYYGGCEFIDEVESLAIDKVKKLFKCNYANVQPHSGSQANQAVFLALLKPGDTILAMDLNSGGHLTHGAKPNLSGKFFNAVHYCVNKDSYLIDYNEVEMLAQQHKPKLIIVGYSAYSRKINFATFKEIADKVGAYLLADIAHIAGLVATEYHSSPIPYAHVVTSTTHKTLRGPRGGLILTNDESISKKINSAVFPGMQGGPLMHVIAAKAIAFSEALMPQYKEYINQVMLNAKVLAKLLQDRGYNILTGGTDNHMLLVDLRGKNITGQEAEYLLDAAGITCNKQVMPFDTTSPTITSGIRLGTPACTTRGFKENDFITVGKYIADILDNIAIIKSAKKNEDITITEIENSLDSVITHTKQHVQELCNSFPIYTN.

(6S)-5,6,7,8-tetrahydrofolate is bound by residues Leu-111 and Gly-115–Leu-117. At Lys-220 the chain carries N6-(pyridoxal phosphate)lysine.

It belongs to the SHMT family. As to quaternary structure, homodimer. It depends on pyridoxal 5'-phosphate as a cofactor.

Its subcellular location is the cytoplasm. The enzyme catalyses (6R)-5,10-methylene-5,6,7,8-tetrahydrofolate + glycine + H2O = (6S)-5,6,7,8-tetrahydrofolate + L-serine. It participates in one-carbon metabolism; tetrahydrofolate interconversion. Its pathway is amino-acid biosynthesis; glycine biosynthesis; glycine from L-serine: step 1/1. Its function is as follows. Catalyzes the reversible interconversion of serine and glycine with tetrahydrofolate (THF) serving as the one-carbon carrier. This reaction serves as the major source of one-carbon groups required for the biosynthesis of purines, thymidylate, methionine, and other important biomolecules. Also exhibits THF-independent aldolase activity toward beta-hydroxyamino acids, producing glycine and aldehydes, via a retro-aldol mechanism. This is Serine hydroxymethyltransferase from Orientia tsutsugamushi (strain Ikeda) (Rickettsia tsutsugamushi).